Consider the following 1075-residue polypeptide: MTIAHHCIFLVILAFLALINVASGATEACLPAGQRKSGMNINFYQYSLKDSSTYSNAAYMAYGYASKTKLGSVGGQTDISIDYNIPCVSSSGTFPCPQEDSYGNWGCKGMGACSNSQGIAYWSTDLFGFYTTPTNVTLEMTGYFLPPQTGSYTFSFATVDDSAILSVGGSIAFECCAQEQPPITSTNFTINGIKPWDGSLPDNITGTVYMYAGYYYPLKVVYSNAVSWGTLPISVELPDGTTVSDNFEGYVYSFDDDLSQSNCTIPDPSIHTTSTITTTTEPWTGTFTSTSTEMTTITDTNGQLTDETVIVIRTPTTASTITTTTEPWTGTFTSTSTEMTTVTGTNGQPTDETVIVIRTPTSEGLITTTTEPWTGTFTSTSTEMTTVTGTNGQPTDETVIVIRTPTSEGLITTTTEPWTGTFTSTSTEVTTITGTNGQPTDETVIVIRTPTSEGLITTTTEPWTGTFTSTSTEMTTVTGTNGQPTDETVIVIRTPTSEGLISTTTEPWTGTFTSTSTEVTTITGTNGQPTDETVIVIRTPTSEGLITTTTEPWTGTFTSTSTEMTTVTGTNGQPTDETVIVIRTPTSEGLITRTTEPWTGTFTSTSTEVTTITGTNGQPTDETVIVIRTPTTAISSSLSSSSGQITSSITSSRPIITPFYPSNGTSVISSSVISSSVTSSLVTSSSFISSSVISSSTTTSTSIFSESSTSSVIPTSSSTSGSSESKTSSASSSSSSSSISSESPKSPTNSSSSLPPVTSATTGQETASSLPPATTTKTSEQTTLVTVTSCESHVCTESISSAIVSTATVTVSGVTTEYTTWCPISTTETTKQTKGTTEQTKGTTEQTTETTKQTTVVTISSCESDICSKTASPAIVSTSTATINGVTTEYTTWCPISTTESKQQTTLVTVTSCESGVCSETTSPAIVSTATATVNDVVTVYPTWRPQTTNEQSVSSKMNSATSETTTNTGAAETKTAVTSSLSRFNHAETQTASATDVIGHSSSVVSVSETGNTMSLTSSGLSTMSQQPRSTPASSMVGSSTASLEISTYAGSANSLLAGSGLSVFIASLLLAII.

Residues 1 to 24 form the signal peptide; sequence MTIAHHCIFLVILAFLALINVASG. One can recognise a PA14 domain in the interval 74–249; it reads GGQTDISIDY…GTTVSDNFEG (176 aa). N-linked (GlcNAc...) asparagine glycans are attached at residues asparagine 135, asparagine 187, asparagine 203, and asparagine 262. Residues 197-240 form a sugar recognition region; sequence DGSLPDNITGTVYMYAGYYYPLKVVYSNAVSWGTLPISVELPDG. 8 repeat units span residues 278–322, 323–367, 368–412, 413–457, 458–502, 503–547, 548–592, and 593–637. The tract at residues 278–637 is 8 X 45 AA approximate tandem repeats, Thr-rich; sequence TTTEPWTGTF…RTPTTAISSS (360 aa). Composition is skewed to low complexity over residues 322–345, 367–390, 457–480, and 547–570; these read TTTTEPWTGTFTSTSTEMTTVTGT. 4 disordered regions span residues 322-349, 366-394, 456-484, and 546-574; these read TTTTEPWTGTFTSTSTEMTTVTGTNGQP and ITTTTEPWTGTFTSTSTEMTTVTGTNGQP. Asparagine 663 carries an N-linked (GlcNAc...) asparagine glycan. Tandem repeats lie at residues 667 to 686 and 687 to 706. The 2 X 20 AA approximate tandem repeats, Ser-rich stretch occupies residues 667–706; the sequence is VISSSVISSSVTSSLVTSSSFISSSVISSSTTTSTSIFSE. Positions 702 to 762 are enriched in low complexity; it reads SIFSESSTSS…SLPPVTSATT (61 aa). Residues 702–781 are disordered; sequence SIFSESSTSS…PATTTKTSEQ (80 aa). N-linked (GlcNAc...) asparagine glycosylation occurs at asparagine 749. A compositionally biased stretch (polar residues) spans 763 to 781; the sequence is GQETASSLPPATTTKTSEQ. 3 consecutive repeat copies span residues 775–825, 847–897, and 898–948. A 3 X 51 AA approximate repeats, Ser/Thr-rich region spans residues 775-948; it reads TTKTSEQTTL…TVYPTWRPQT (174 aa). The span at 948–958 shows a compositional bias: polar residues; the sequence is TTNEQSVSSKM. Disordered stretches follow at residues 948–980 and 1016–1038; these read TTNEQSVSSKMNSATSETTTNTGAAETKTAVTS and SLTSSGLSTMSQQPRSTPASSMV. 2 stretches are compositionally biased toward low complexity: residues 959–977 and 1016–1026; these read NSATSETTTNTGAAETKTA and SLTSSGLSTMS. The span at 1027-1038 shows a compositional bias: polar residues; that stretch reads QQPRSTPASSMV. The GPI-anchor amidated glycine moiety is linked to residue glycine 1052. Residues 1053–1075 constitute a propeptide, removed in mature form; sequence SANSLLAGSGLSVFIASLLLAII.

The protein belongs to the flocculin family. In terms of processing, extensively O-glycosylated. Post-translationally, the GPI-anchor is attached to the protein in the endoplasmic reticulum and serves to target the protein to the cell surface. There, the glucosamine-inositol phospholipid moiety is cleaved off and the GPI-modified mannoprotein is covalently attached via its lipidless GPI glycan remnant to the 1,6-beta-glucan of the outer cell wall layer.

It localises to the secreted. The protein localises to the cell wall. The protein resides in the membrane. In terms of biological role, cell wall protein that participates directly in adhesive cell-cell interactions during yeast flocculation, a reversible, asexual and Ca(2+)-dependent process in which cells adhere to form aggregates (flocs) consisting of thousands of cells. The lectin-like protein sticks out of the cell wall of flocculent cells and selectively binds mannose residues in the cell walls of adjacent cells. Activity is inhibited by mannose, but not by glucose, maltose, sucrose or galactose. This Saccharomyces cerevisiae (strain ATCC 204508 / S288c) (Baker's yeast) protein is Flocculation protein FLO5 (FLO5).